We begin with the raw amino-acid sequence, 93 residues long: Small ribosomal subunit protein uS19m (93 aa).

It belongs to the universal ribosomal protein uS19 family.

The protein resides in the mitochondrion. The polypeptide is Small ribosomal subunit protein uS19m (RPS19) (Marchantia polymorpha (Common liverwort)).